A 335-amino-acid polypeptide reads, in one-letter code: Lipase chaperone (335 aa).

The chain crosses the membrane as a helical span at residues 7–23; that stretch reads LLPLAIALGLGFFIARP.

The protein belongs to the lipase chaperone family.

It localises to the cell inner membrane. In terms of biological role, may be involved in the folding of the extracellular lipase during its passage through the periplasm. In Ectopseudomonas mendocina (Pseudomonas mendocina), this protein is Lipase chaperone (lifO).